The sequence spans 197 residues: Probable GTP-binding protein EngB (197 aa).

The 172-residue stretch at 26-197 (ELPEIALAGR…EAWDAILEKL (172 aa)) folds into the EngB-type G domain. GTP is bound by residues 34-41 (GRSNVGKS), 61-65 (GKTQL), 79-82 (DVPG), 146-149 (TKAD), and 178-180 (FSS). Mg(2+) is bound by residues Ser41 and Thr63.

This sequence belongs to the TRAFAC class TrmE-Era-EngA-EngB-Septin-like GTPase superfamily. EngB GTPase family. Requires Mg(2+) as cofactor.

Its function is as follows. Necessary for normal cell division and for the maintenance of normal septation. The sequence is that of Probable GTP-binding protein EngB from Streptococcus pneumoniae (strain CGSP14).